The chain runs to 230 residues: MCFGLPNINREGYSFIVVSFIVTCIAFSISWGFGVTCLFPTLLCTYFFRDPARAVPNNKNLILSPADGVISKIEEVNYPLSAENGEEKKFTLVSIFLSVLNVHVNRIPISGTIKEMSYKKGKFVSAMSNRSSNENEKQVIVIEYEKGKEIIVEQIAGLIARRIVCNLGISQNVKAGERFGIIRFGSRVNIYVPADTEVRVSEGQTVIGGETIIANLNKENVQEKLTFDVI.

The active-site Schiff-base intermediate with substrate; via pyruvic acid is the Ser186. Ser186 carries the pyruvic acid (Ser); by autocatalysis modification.

This sequence belongs to the phosphatidylserine decarboxylase family. PSD-A subfamily. In terms of assembly, heterodimer of a large membrane-associated beta subunit and a small pyruvoyl-containing alpha subunit. Pyruvate is required as a cofactor. Is synthesized initially as an inactive proenzyme. Formation of the active enzyme involves a self-maturation process in which the active site pyruvoyl group is generated from an internal serine residue via an autocatalytic post-translational modification. Two non-identical subunits are generated from the proenzyme in this reaction, and the pyruvate is formed at the N-terminus of the alpha chain, which is derived from the carboxyl end of the proenzyme. The post-translation cleavage follows an unusual pathway, termed non-hydrolytic serinolysis, in which the side chain hydroxyl group of the serine supplies its oxygen atom to form the C-terminus of the beta chain, while the remainder of the serine residue undergoes an oxidative deamination to produce ammonia and the pyruvoyl prosthetic group on the alpha chain.

The protein resides in the cell membrane. The catalysed reaction is a 1,2-diacyl-sn-glycero-3-phospho-L-serine + H(+) = a 1,2-diacyl-sn-glycero-3-phosphoethanolamine + CO2. Its pathway is phospholipid metabolism; phosphatidylethanolamine biosynthesis; phosphatidylethanolamine from CDP-diacylglycerol: step 2/2. Catalyzes the formation of phosphatidylethanolamine (PtdEtn) from phosphatidylserine (PtdSer). This is Phosphatidylserine decarboxylase proenzyme from Wolbachia pipientis wMel.